The following is a 445-amino-acid chain: Glutamate-1-semialdehyde 2,1-aminomutase (445 aa).

An N6-(pyridoxal phosphate)lysine modification is found at K263.

This sequence belongs to the class-III pyridoxal-phosphate-dependent aminotransferase family. HemL subfamily. Pyridoxal 5'-phosphate is required as a cofactor.

Its subcellular location is the cytoplasm. The catalysed reaction is (S)-4-amino-5-oxopentanoate = 5-aminolevulinate. It functions in the pathway porphyrin-containing compound metabolism; protoporphyrin-IX biosynthesis; 5-aminolevulinate from L-glutamyl-tRNA(Glu): step 2/2. This chain is Glutamate-1-semialdehyde 2,1-aminomutase, found in Haloarcula marismortui (strain ATCC 43049 / DSM 3752 / JCM 8966 / VKM B-1809) (Halobacterium marismortui).